Consider the following 183-residue polypeptide: MDSSDKSNLPLLLEIDWERHEAYTGENIFHVIAKKGWLKMLCALEGLVDEKIKPWLRKWSRDGNTCLHEAALRNKGPQAIRIMEKLIEYGADLNLKSSCHKPVLHVAVERNDYELVAWICQQPGINLEAEDFYKFTAHQLASKKNLNNDKKMVKILETYGAIPRQDGSSEDEVSDSEEKSDSE.

2 ANK repeats span residues 62 to 95 (DGNTCLHEAALRNKGPQAIRIMEKLIEYGADLNL) and 99 to 129 (CHKPVLHVAVERNDYELVAWICQQPGINLEA). Residues 163–183 (PRQDGSSEDEVSDSEEKSDSE) form a disordered region.

Belongs to the polydnaviridae I-Kappa-B like protein family.

Its function is as follows. Suppresses the host immune response through NF-kappa-B inactivation. Possesses ankyrin repeat domains required for NF-kappa-B binding but lacks the regulatory regions required for dissociation from NF-kappa-B and degradation. Therefore, prevents host NF-kappa-B release and subsequent activation. This Microplitis demolitor (Parasitoid wasp) protein is I-kappa-B like protein N2 (N5).